The primary structure comprises 445 residues: Questin oxidase (445 aa).

It belongs to the questin oxidase family. NADPH is required as a cofactor. As to expression, specifically expressed in conidia.

It functions in the pathway secondary metabolite biosynthesis. In terms of biological role, questin oxidase; part of the gene cluster that mediates the biosynthesis of trypacidin, a mycotoxin with antiprotozoal activity and that plays a role in the infection process. The pathway begins with the synthesis of atrochrysone thioester by the polyketide synthase (PKS) tpcC. The atrochrysone carboxyl ACP thioesterase tpcB then breaks the thioester bond and releases the atrochrysone carboxylic acid from tpcC. The decarboxylase tpcK converts atrochrysone carboxylic acid to atrochrysone which is further reduced into emodin anthrone. The next step is performed by the emodin anthrone oxygenase tpcL that catalyzes the oxidation of emodinanthrone to emodin. Emodin O-methyltransferase encoded by tpcA catalyzes methylation of the 8-hydroxy group of emodin to form questin. Ring cleavage of questin by questin oxidase tpcI leads to desmethylsulochrin via several intermediates including questin epoxide. Another methylation step catalyzed by tpcM leads to the formation of sulochrin which is further converted to monomethylsulfochrin by tpcH. Finally, the tpcJ catalyzes the conversion of monomethylsulfochrin to trypacidin. Trypacidin is toxic for human pulmonary and bronchial epithelial cells by initiating the intracellular formation of nitric oxide (NO) and hydrogen peroxide (H(2)O(2)), thus triggering host necrotic cell death. The trypacidin pathway is also able to produce endocrocin via a distinct route from the endocrocin Enc pathway. This chain is Questin oxidase, found in Aspergillus fumigatus (strain ATCC MYA-4609 / CBS 101355 / FGSC A1100 / Af293) (Neosartorya fumigata).